The chain runs to 387 residues: Transmembrane protein 120 homolog (387 aa).

Residues 1–39 (MNIDSLKNEWEELNKEFAELESCNRRYIELLEQLHSHQQ) are a coiled coil. Asn111 is a glycosylation site (N-linked (GlcNAc...) asparagine). 6 helical membrane passes run 130–150 (FKLI…IFNY), 155–175 (LAFI…ESIL), 191–211 (FIST…HWQI), 216–238 (FMYF…KGLL), 264–284 (GLSF…YNAW), and 302–322 (VMSG…LWVV). The segment at 346–387 (RKEMKNSASDLDLSSGSKLSPTATTTTSIATATQTPAEKKET) is disordered. Ser352, Ser354, and Ser365 each carry phosphoserine. Residues 352 to 381 (SASDLDLSSGSKLSPTATTTTSIATATQTP) show a composition bias toward low complexity.

This sequence belongs to the TMEM120 family.

The protein resides in the membrane. This chain is Transmembrane protein 120 homolog, found in Drosophila melanogaster (Fruit fly).